The following is a 563-amino-acid chain: Arginine--tRNA ligase (563 aa).

Residues 120 to 130 carry the 'HIGH' region motif; the sequence is PNIAKPFHIGH.

Belongs to the class-I aminoacyl-tRNA synthetase family. In terms of assembly, monomer.

It localises to the cytoplasm. The enzyme catalyses tRNA(Arg) + L-arginine + ATP = L-arginyl-tRNA(Arg) + AMP + diphosphate. The polypeptide is Arginine--tRNA ligase (Clostridium botulinum (strain ATCC 19397 / Type A)).